Reading from the N-terminus, the 4467-residue chain is Protocadherin-like protein (4467 aa).

The signal sequence occupies residues 1 to 22 (MRGINAIVGFLLCFCLLHRINT). Cadherin domains are found at residues 23–128 (AVQF…SPTF), 129–238 (PQHL…SPVF), 239–350 (EKKS…VPVF), 351–455 (QEES…TPVF), 459–566 (NPQQ…NPDF), 567–664 (SKVV…PPTF), 665–764 (KNAP…PPTF), 765–884 (SRSS…SPEF), 885–994 (SQTS…PPLF), 1092–1197 (EAQP…QPRF), 1290–1395 (SRTV…SPKF), 1396–1499 (SADS…PPKF), 1495–1597 (GPPK…EPQF), 1601–1701 (SNGF…QPVR), 1793–1891 (TMID…KPQF), 1892–1992 (SESA…YPKF), 1993–2100 (EPNL…KPQF), 2101–2202 (LESD…RPVF), 2203–2312 (TDCP…FPFF), 2313–2423 (LTRT…PPAF), 2425–2529 (PSAV…TPTF), 2530–2639 (KLEE…PPIF), 2640–2746 (PKPS…IPKF), 2747–2849 (DNLI…SPYF), 2850–2954 (PNPP…APVF), 2955–3062 (NPRE…PPVF), 3063–3170 (VPAE…GPWF), and 3173–3288 (RYYE…EPFD). Topologically, residues 23–4258 (AVQFKQEILE…RPSSRWANPA (4236 aa)) are extracellular. The EGF-like 1 domain maps to 3551–3589 (PDINCTTGTPCLHGGTCHNAVPKGIICECGRDYLGPECQ). Disulfide bonds link Cys-3555-Cys-3567, Cys-3561-Cys-3577, Cys-3579-Cys-3588, Cys-3762-Cys-3788, Cys-3794-Cys-3803, Cys-3797-Cys-3812, and Cys-3814-Cys-3823. In terms of domain architecture, Laminin G-like 1 spans 3590–3788 (STTRTFRGNS…LKEVNTELGC (199 aa)). One can recognise an EGF-like 2 domain in the interval 3790–3824 (LNNQCPNCNGRGYCEPFWNYAICVCDLGFGGANCD). The region spanning 3842 to 4096 (VKQVKRKRRE…KVIISSSGGS (255 aa)) is the Laminin G-like 2 domain. Residues 4089–4118 (IISSSGGSVSGGSGGASGGSGGASGSGGSV) form a disordered region. Positions 4096 to 4118 (SVSGGSGGASGGSGGASGSGGSV) are enriched in gly residues. The EGF-like 3 domain maps to 4206–4238 (PCGSNFCRHGGTCVSADPPYCLCPVGWSGPVCE). 3 disulfides stabilise this stretch: Cys-4207-Cys-4218, Cys-4212-Cys-4226, and Cys-4228-Cys-4237. Residues 4259-4279 (VIACILVILLAILVIIGAVLL) traverse the membrane as a helical segment. At 4280-4467 (KRRPQPAVVA…NLNRIFNEDE (188 aa)) the chain is on the cytoplasmic side. A disordered region spans residues 4424-4445 (DVDDLSELGDSDEEPDEEEEQE).

Component of the acid-insoluble organic matrix of the aragonitic skeleton (at protein level).

The protein localises to the membrane. The chain is Protocadherin-like protein from Acropora millepora (Staghorn coral).